The chain runs to 791 residues: KN motif and ankyrin repeat domain-containing protein 3 (791 aa).

5 disordered regions span residues methionine 1–threonine 37, arginine 56–glutamine 181, alanine 254–glutamate 312, glycine 401–methionine 425, and tyrosine 463–glutamate 514. The segment covering serine 25 to serine 34 has biased composition (polar residues). Over residues leucine 105–arginine 125 the composition is skewed to low complexity. Basic and acidic residues predominate over residues proline 127–alanine 149. Residues serine 151, serine 159, serine 163, serine 166, serine 167, and serine 176 each carry the phosphoserine modification. Over residues arginine 158–alanine 180 the composition is skewed to low complexity. A coiled-coil region spans residues alanine 180 to glutamine 229. Composition is skewed to basic and acidic residues over residues alanine 254–glutamate 280 and proline 293–glutamate 312. Serine 279 bears the Phosphoserine mark. The segment covering glycine 401–glutamate 410 has biased composition (polar residues). Over residues serine 485–glycine 496 the composition is skewed to low complexity. The span at histidine 505 to glutamate 514 shows a compositional bias: basic and acidic residues. 5 ANK repeats span residues asparagine 606–histidine 636, alanine 640–serine 677, threonine 679–valine 708, aspartate 712–isoleucine 742, and glutamate 746–glutamine 775. Positions serine 772–proline 783 are enriched in polar residues. Positions serine 772 to lysine 791 are disordered.

Its function is as follows. May be involved in the control of cytoskeleton formation by regulating actin polymerization. This chain is KN motif and ankyrin repeat domain-containing protein 3, found in Mus musculus (Mouse).